Here is a 312-residue protein sequence, read N- to C-terminus: tRNA dimethylallyltransferase (312 aa).

Residue 11–18 (GPTAVGKT) participates in ATP binding. 13–18 (TAVGKT) contributes to the substrate binding site. Residues 159-163 (QRVLR) are interaction with substrate tRNA.

Belongs to the IPP transferase family. As to quaternary structure, monomer. Mg(2+) serves as cofactor.

The enzyme catalyses adenosine(37) in tRNA + dimethylallyl diphosphate = N(6)-dimethylallyladenosine(37) in tRNA + diphosphate. Functionally, catalyzes the transfer of a dimethylallyl group onto the adenine at position 37 in tRNAs that read codons beginning with uridine, leading to the formation of N6-(dimethylallyl)adenosine (i(6)A). The sequence is that of tRNA dimethylallyltransferase from Macrococcus caseolyticus (strain JCSC5402) (Macrococcoides caseolyticum).